Consider the following 114-residue polypeptide: MHELSVTQGLVDMLVEEAEKRKVKKVTKVTVVIGELTGIESESVKFYFDILTENTVAEGAELVFKIVRAQFKCTQCGNVFERSNFTFKCPVCGGQGVLIDKRGKEFYIESIEVE.

His-2 is a binding site for Ni(2+). 4 residues coordinate Zn(2+): Cys-73, Cys-76, Cys-89, and Cys-92.

The protein belongs to the HypA/HybF family.

Functionally, involved in the maturation of [NiFe] hydrogenases. Required for nickel insertion into the metal center of the hydrogenase. This Caldanaerobacter subterraneus subsp. tengcongensis (strain DSM 15242 / JCM 11007 / NBRC 100824 / MB4) (Thermoanaerobacter tengcongensis) protein is Hydrogenase maturation factor HypA.